Consider the following 567-residue polypeptide: Urease subunit alpha (567 aa).

Residues 129 to 567 (GGIDAHIHFI…LPLAQRYFLF (439 aa)) form the Urease domain. Ni(2+) is bound by residues His-134, His-136, and Lys-217. Lys-217 carries the N6-carboxylysine modification. Substrate is bound at residue His-219. Residues His-246 and His-272 each contribute to the Ni(2+) site. His-320 serves as the catalytic Proton donor. Residue Asp-360 coordinates Ni(2+).

This sequence belongs to the metallo-dependent hydrolases superfamily. Urease alpha subunit family. In terms of assembly, heterotrimer of UreA (gamma), UreB (beta) and UreC (alpha) subunits. Three heterotrimers associate to form the active enzyme. It depends on Ni cation as a cofactor. Carboxylation allows a single lysine to coordinate two nickel ions.

The protein localises to the cytoplasm. It catalyses the reaction urea + 2 H2O + H(+) = hydrogencarbonate + 2 NH4(+). Its pathway is nitrogen metabolism; urea degradation; CO(2) and NH(3) from urea (urease route): step 1/1. The sequence is that of Urease subunit alpha from Hahella chejuensis (strain KCTC 2396).